Reading from the N-terminus, the 156-residue chain is Small ribosomal subunit protein uS7A/uS7B (156 aa).

The protein belongs to the universal ribosomal protein uS7 family. As to quaternary structure, part of the 30S ribosomal subunit. Contacts proteins S9 and S11.

In terms of biological role, one of the primary rRNA binding proteins, it binds directly to 16S rRNA where it nucleates assembly of the head domain of the 30S subunit. Is located at the subunit interface close to the decoding center, probably blocks exit of the E-site tRNA. This chain is Small ribosomal subunit protein uS7A/uS7B, found in Bartonella bacilliformis (strain ATCC 35685 / KC583 / Herrer 020/F12,63).